The chain runs to 382 residues: Alanine racemase (382 aa).

The active-site Proton acceptor; specific for D-alanine is the Lys-39. Position 39 is an N6-(pyridoxal phosphate)lysine (Lys-39). Arg-138 contacts substrate. Catalysis depends on Tyr-265, which acts as the Proton acceptor; specific for L-alanine. Residue Met-312 participates in substrate binding.

Belongs to the alanine racemase family. It depends on pyridoxal 5'-phosphate as a cofactor.

The enzyme catalyses L-alanine = D-alanine. It functions in the pathway amino-acid biosynthesis; D-alanine biosynthesis; D-alanine from L-alanine: step 1/1. In terms of biological role, catalyzes the interconversion of L-alanine and D-alanine. May also act on other amino acids. The polypeptide is Alanine racemase (alr) (Staphylococcus epidermidis (strain ATCC 35984 / DSM 28319 / BCRC 17069 / CCUG 31568 / BM 3577 / RP62A)).